We begin with the raw amino-acid sequence, 305 residues long: UDP-3-O-acyl-N-acetylglucosamine deacetylase (305 aa).

Zn(2+)-binding residues include histidine 78, histidine 237, and aspartate 241. Histidine 264 functions as the Proton donor in the catalytic mechanism.

This sequence belongs to the LpxC family. Requires Zn(2+) as cofactor.

The enzyme catalyses a UDP-3-O-[(3R)-3-hydroxyacyl]-N-acetyl-alpha-D-glucosamine + H2O = a UDP-3-O-[(3R)-3-hydroxyacyl]-alpha-D-glucosamine + acetate. It functions in the pathway glycolipid biosynthesis; lipid IV(A) biosynthesis; lipid IV(A) from (3R)-3-hydroxytetradecanoyl-[acyl-carrier-protein] and UDP-N-acetyl-alpha-D-glucosamine: step 2/6. In terms of biological role, catalyzes the hydrolysis of UDP-3-O-myristoyl-N-acetylglucosamine to form UDP-3-O-myristoylglucosamine and acetate, the committed step in lipid A biosynthesis. This Burkholderia ambifaria (strain MC40-6) protein is UDP-3-O-acyl-N-acetylglucosamine deacetylase.